The following is a 413-amino-acid chain: DNA primase DnaG (413 aa).

Residues 168-246 enclose the Toprim domain; it reads PNLIIVEGRA…KIDYVARAPV (79 aa). Mg(2+) is bound by residues glutamate 174, aspartate 219, and aspartate 221.

The protein belongs to the archaeal DnaG primase family. Forms a ternary complex with MCM helicase and DNA. Component of the archaeal exosome complex. The cofactor is Mg(2+).

It carries out the reaction ssDNA + n NTP = ssDNA/pppN(pN)n-1 hybrid + (n-1) diphosphate.. Its function is as follows. RNA polymerase that catalyzes the synthesis of short RNA molecules used as primers for DNA polymerase during DNA replication. Also part of the exosome, which is a complex involved in RNA degradation. Acts as a poly(A)-binding protein that enhances the interaction between heteromeric, adenine-rich transcripts and the exosome. The sequence is that of DNA primase DnaG from Metallosphaera sedula (strain ATCC 51363 / DSM 5348 / JCM 9185 / NBRC 15509 / TH2).